The sequence spans 401 residues: 8-amino-7-oxononanoate synthase (401 aa).

Substrate is bound at residue R19. Position 106-107 (106-107) interacts with pyridoxal 5'-phosphate; that stretch reads GY. H131 serves as a coordination point for substrate. Pyridoxal 5'-phosphate-binding residues include S176, H204, and T233. Residue K236 is modified to N6-(pyridoxal phosphate)lysine. T350 contacts substrate.

Belongs to the class-II pyridoxal-phosphate-dependent aminotransferase family. BioF subfamily. In terms of assembly, homodimer. The cofactor is pyridoxal 5'-phosphate.

It catalyses the reaction 6-carboxyhexanoyl-[ACP] + L-alanine + H(+) = (8S)-8-amino-7-oxononanoate + holo-[ACP] + CO2. Its pathway is cofactor biosynthesis; biotin biosynthesis. Functionally, catalyzes the decarboxylative condensation of pimeloyl-[acyl-carrier protein] and L-alanine to produce 8-amino-7-oxononanoate (AON), [acyl-carrier protein], and carbon dioxide. In Pseudomonas aeruginosa (strain LESB58), this protein is 8-amino-7-oxononanoate synthase.